Reading from the N-terminus, the 467-residue chain is Argininosuccinate lyase (467 aa).

Belongs to the lyase 1 family. Argininosuccinate lyase subfamily.

It localises to the cytoplasm. It carries out the reaction 2-(N(omega)-L-arginino)succinate = fumarate + L-arginine. It functions in the pathway amino-acid biosynthesis; L-arginine biosynthesis; L-arginine from L-ornithine and carbamoyl phosphate: step 3/3. This chain is Argininosuccinate lyase, found in Anaeromyxobacter sp. (strain K).